The sequence spans 340 residues: MSTAVINTDDDQLEPTLQSILDQKSLRWIFVGGKGGVGKTTTSCSLAIQLAKVRRSVLLISTDPAHNLSDAFSQKFGKEARLINGFENLSAMEIDPNGSIQELMGQAEEGEGPAAGMGGMMQDLAFAIPGIDEAMSFAEVLKQVKSLSYETIIFDTAPTGHTLRFLQFPTVLEKALAKVSQLSTQFGPMLNGLLGANGSLPNGQNLNEMMEKLEGLRETISEVNGQFKDENLTTFVCVCIPEFLSLYETERMIQELGSYHIDTHCIVVNQLLFPKKGSDCDQCNARRKMQKKYLEQIEELYDEFNVVKMPLLVEEVRGKERLEKFSEMLITPYVPPAGGL.

Residue 34-41 (KGGVGKTT) coordinates ATP. Asp-63 is a catalytic residue. Residues Glu-242 and Asn-269 each coordinate ATP. 2 residues coordinate Zn(2+): Cys-280 and Cys-283.

It belongs to the arsA ATPase family. Homodimer.

The protein resides in the cytoplasm. Its subcellular location is the endoplasmic reticulum. In terms of biological role, ATPase required for the post-translational delivery of tail-anchored (TA) proteins to the endoplasmic reticulum. Recognizes and selectively binds the transmembrane domain of TA proteins in the cytosol. This complex then targets to the endoplasmic reticulum by membrane-bound receptors, where the tail-anchored protein is released for insertion. This process is regulated by ATP binding and hydrolysis. ATP binding drives the homodimer towards the closed dimer state, facilitating recognition of newly synthesized TA membrane proteins. ATP hydrolysis is required for insertion. Subsequently, the homodimer reverts towards the open dimer state, lowering its affinity for the membrane-bound receptor, and returning it to the cytosol to initiate a new round of targeting. This Botryotinia fuckeliana (strain B05.10) (Noble rot fungus) protein is ATPase get3 (get3).